The sequence spans 301 residues: MKIGILSQFPELYSTRRLVAACESRGHEAVVINTLNCYMNINSIKPSIHYQGQELTGFDAIIPRIHASVTFYGCAVVRQFEMMGVFAANDSISIARSRDKLRALQLLSRKGIGMPVTGFANKPNDIPDLINMVGGAPLVIKLLEGTQGIGVVLAETKTAAESVIEAFLGLKANIMVQEYIKESNGSDIRCFVVGDKVVASMKRQGPEGDFRSNLHLGGCGEKVKITPEERKMAVAAVKAMGLVVAGVDILRSNRGPLILEVNSAPGIEGIEQTTGISVTEPIVEYIEKMVLARKSNRAVIA.

The ATP-grasp domain maps to 104–287 (LQLLSRKGIG…VTEPIVEYIE (184 aa)). ATP is bound by residues K141, 178–179 (EY), D187, and 211–213 (RSN). D248, E260, and N262 together coordinate Mg(2+). Mn(2+)-binding residues include D248, E260, and N262.

This sequence belongs to the RimK family. The cofactor is Mg(2+). Mn(2+) is required as a cofactor.

This chain is Probable alpha-L-glutamate ligase 1, found in Shewanella sp. (strain MR-4).